The sequence spans 178 residues: Large ribosomal subunit protein uL6 (178 aa).

This sequence belongs to the universal ribosomal protein uL6 family. As to quaternary structure, part of the 50S ribosomal subunit.

Its function is as follows. This protein binds to the 23S rRNA, and is important in its secondary structure. It is located near the subunit interface in the base of the L7/L12 stalk, and near the tRNA binding site of the peptidyltransferase center. The chain is Large ribosomal subunit protein uL6 from Francisella tularensis subsp. holarctica (strain FTNF002-00 / FTA).